Reading from the N-terminus, the 430-residue chain is Adenylosuccinate synthetase (430 aa).

Residues 12–18 (GDEGKGK) and 40–42 (GHT) contribute to the GTP site. Catalysis depends on aspartate 13, which acts as the Proton acceptor. Residues aspartate 13 and glycine 40 each coordinate Mg(2+). Residues 13 to 16 (DEGK), 38 to 41 (NAGH), threonine 130, arginine 144, glutamine 224, threonine 239, and arginine 303 contribute to the IMP site. The Proton donor role is filled by histidine 41. 299-305 (TVTGRKR) is a binding site for substrate. GTP is bound by residues arginine 305, 331–333 (KLD), and 413–415 (STS).

This sequence belongs to the adenylosuccinate synthetase family. As to quaternary structure, homodimer. Requires Mg(2+) as cofactor.

Its subcellular location is the cytoplasm. It carries out the reaction IMP + L-aspartate + GTP = N(6)-(1,2-dicarboxyethyl)-AMP + GDP + phosphate + 2 H(+). The protein operates within purine metabolism; AMP biosynthesis via de novo pathway; AMP from IMP: step 1/2. In terms of biological role, plays an important role in the de novo pathway of purine nucleotide biosynthesis. Catalyzes the first committed step in the biosynthesis of AMP from IMP. The polypeptide is Adenylosuccinate synthetase (Methylorubrum extorquens (strain CM4 / NCIMB 13688) (Methylobacterium extorquens)).